The sequence spans 197 residues: Phosphoheptose isomerase (197 aa).

Residues 34 to 196 form the SIS domain; sequence MVHCLLSGNK…DHTLFPQDEQ (163 aa). 49-51 contacts substrate; the sequence is NGG. Residues His58 and Glu62 each coordinate Zn(2+). Substrate contacts are provided by residues Glu62, 91–92, 117–119, Ser122, and Gln172; these read ND and STS. Zn(2+)-binding residues include Gln172 and His180.

It belongs to the SIS family. GmhA subfamily. In terms of assembly, homotetramer. Zn(2+) serves as cofactor.

The protein localises to the cytoplasm. It catalyses the reaction 2 D-sedoheptulose 7-phosphate = D-glycero-alpha-D-manno-heptose 7-phosphate + D-glycero-beta-D-manno-heptose 7-phosphate. It participates in carbohydrate biosynthesis; D-glycero-D-manno-heptose 7-phosphate biosynthesis; D-glycero-alpha-D-manno-heptose 7-phosphate and D-glycero-beta-D-manno-heptose 7-phosphate from sedoheptulose 7-phosphate: step 1/1. Catalyzes the isomerization of sedoheptulose 7-phosphate in D-glycero-D-manno-heptose 7-phosphate. This is Phosphoheptose isomerase from Shewanella halifaxensis (strain HAW-EB4).